We begin with the raw amino-acid sequence, 122 residues long: Large ribosomal subunit protein uL18 (122 aa).

Belongs to the universal ribosomal protein uL18 family. As to quaternary structure, part of the 50S ribosomal subunit; part of the 5S rRNA/L5/L18/L25 subcomplex. Contacts the 5S and 23S rRNAs.

In terms of biological role, this is one of the proteins that bind and probably mediate the attachment of the 5S RNA into the large ribosomal subunit, where it forms part of the central protuberance. The chain is Large ribosomal subunit protein uL18 from Geobacter sp. (strain M21).